Reading from the N-terminus, the 319-residue chain is Beta-ketoacyl-[acyl-carrier-protein] synthase III (319 aa).

Residues C112 and H246 contribute to the active site. Residues 247–251 (QANKR) are ACP-binding. Residue N276 is part of the active site.

The protein belongs to the thiolase-like superfamily. FabH family. In terms of assembly, homodimer.

The protein localises to the cytoplasm. It catalyses the reaction malonyl-[ACP] + acetyl-CoA + H(+) = 3-oxobutanoyl-[ACP] + CO2 + CoA. It participates in lipid metabolism; fatty acid biosynthesis. In terms of biological role, catalyzes the condensation reaction of fatty acid synthesis by the addition to an acyl acceptor of two carbons from malonyl-ACP. Catalyzes the first condensation reaction which initiates fatty acid synthesis and may therefore play a role in governing the total rate of fatty acid production. Possesses both acetoacetyl-ACP synthase and acetyl transacylase activities. Its substrate specificity determines the biosynthesis of branched-chain and/or straight-chain of fatty acids. In Psychromonas ingrahamii (strain DSM 17664 / CCUG 51855 / 37), this protein is Beta-ketoacyl-[acyl-carrier-protein] synthase III.